The chain runs to 347 residues: NADH-ubiquinone oxidoreductase chain 2 (347 aa).

10 consecutive transmembrane segments (helical) span residues 13–33 (IFTGTLITALSSHWFFTWVGL), 60–80 (FLTQATASMILLMAILSNSML), 96–116 (LMIMMAMAMKLGMAPFHFWVP), 123–143 (PLMSGLLLLTWQKLAPISIMY), 149–169 (LNVNLLLTLSILSIMAGSWGG), 178–198 (ILAYSSITHMGWMMAVLPYNP), 201–221 (TILNLTIYIILTTTAFLLLNL), 247–267 (TLLSLGGLPPLTGFLPKWVII), 274–294 (NSLIIPTIMAIITLLNLYFYL), and 326–346 (LPTLITLTTLLLPISPFMLMI).

The protein belongs to the complex I subunit 2 family. As to quaternary structure, core subunit of respiratory chain NADH dehydrogenase (Complex I) which is composed of 45 different subunits. Interacts with TMEM242.

The protein localises to the mitochondrion inner membrane. The enzyme catalyses a ubiquinone + NADH + 5 H(+)(in) = a ubiquinol + NAD(+) + 4 H(+)(out). In terms of biological role, core subunit of the mitochondrial membrane respiratory chain NADH dehydrogenase (Complex I) which catalyzes electron transfer from NADH through the respiratory chain, using ubiquinone as an electron acceptor. Essential for the catalytic activity and assembly of complex I. This is NADH-ubiquinone oxidoreductase chain 2 from Pan troglodytes (Chimpanzee).